Here is an 85-residue protein sequence, read N- to C-terminus: Large ribosomal subunit protein bL27 (85 aa).

The disordered stretch occupies residues M1 to K24.

Belongs to the bacterial ribosomal protein bL27 family.

The polypeptide is Large ribosomal subunit protein bL27 (Nitrosomonas eutropha (strain DSM 101675 / C91 / Nm57)).